The following is a 150-amino-acid chain: Large ribosomal subunit protein bL9 (150 aa).

The protein belongs to the bacterial ribosomal protein bL9 family.

Its function is as follows. Binds to the 23S rRNA. This is Large ribosomal subunit protein bL9 from Wolinella succinogenes (strain ATCC 29543 / DSM 1740 / CCUG 13145 / JCM 31913 / LMG 7466 / NCTC 11488 / FDC 602W) (Vibrio succinogenes).